Consider the following 239-residue polypeptide: tRNA (guanine-N(7)-)-methyltransferase (239 aa).

S-adenosyl-L-methionine contacts are provided by Glu-69, Glu-94, Asp-121, and Asp-144. Residue Asp-144 is part of the active site. Substrate is bound at residue Lys-148. The interaction with RNA stretch occupies residues 150-155 (RHNKRR). Substrate-binding positions include Asp-180 and 217–220 (TKFE).

It belongs to the class I-like SAM-binding methyltransferase superfamily. TrmB family. As to quaternary structure, monomer.

It catalyses the reaction guanosine(46) in tRNA + S-adenosyl-L-methionine = N(7)-methylguanosine(46) in tRNA + S-adenosyl-L-homocysteine. It participates in tRNA modification; N(7)-methylguanine-tRNA biosynthesis. Functionally, catalyzes the formation of N(7)-methylguanine at position 46 (m7G46) in tRNA. The sequence is that of tRNA (guanine-N(7)-)-methyltransferase from Salmonella choleraesuis (strain SC-B67).